A 103-amino-acid polypeptide reads, in one-letter code: Large ribosomal subunit protein eL14 (103 aa).

Belongs to the eukaryotic ribosomal protein eL14 family.

This Pyrobaculum arsenaticum (strain DSM 13514 / JCM 11321 / PZ6) protein is Large ribosomal subunit protein eL14.